Consider the following 493-residue polypeptide: MNPTTSGSAVSTLEEKNLGRIAQIIGPVLDVVFPLGKMPNIYNALVVKGRDTVGQQINVTCEVQQLLGNNRVRAVAMSATDGLTRGMEVIDTGAALSVPVGGATLGRIFNVLGEPVDNLGPVDTRTTSPIHRSAPAFIQLDTKLSIFETGIKVVDLLAPYRRGGKIGLFGGAGVGKTVLIMELINNIAKAHGGVSVFGGVGERTREGNDLYMEMKESGVINEKNIAESKVALVYGQMNEPPGARMRVGLTALTMAEYFRDVNEQDVLLFIDNIFRFVQAGSEVSALLGRMPSAVGYQPTLSTEMGSLQERITSTKEGSITSIQAVYVPADDLTDPAPATTFAHLDATTVLSRGLAAKGIYPAVDPLDSTSTMLQPRIVGEEHYETAQRVKQTLQRYKELQDIIAILGLDELSEEDRLTVARARKIERFLSQPFFVAEVFTGSPGKYVGLTETIRGFQLILSGELDGLPEQAFYLVGNIDEATAKAMNLEGEKK.

170-177 (GGAGVGKT) is an ATP binding site.

The protein belongs to the ATPase alpha/beta chains family. In terms of assembly, F-type ATPases have 2 components, CF(1) - the catalytic core - and CF(0) - the membrane proton channel. CF(1) has five subunits: alpha(3), beta(3), gamma(1), delta(1), epsilon(1). CF(0) has four main subunits: a(1), b(1), b'(1) and c(9-12).

It is found in the plastid. It localises to the chloroplast thylakoid membrane. It catalyses the reaction ATP + H2O + 4 H(+)(in) = ADP + phosphate + 5 H(+)(out). Its function is as follows. Produces ATP from ADP in the presence of a proton gradient across the membrane. The catalytic sites are hosted primarily by the beta subunits. The polypeptide is ATP synthase subunit beta, chloroplastic (Lachenalia pusilla (Cape cowslips)).